We begin with the raw amino-acid sequence, 494 residues long: Tripartite motif-containing protein 5 (494 aa).

At A2 the chain carries N-acetylalanine. The RING-type zinc-finger motif lies at 15–59; the sequence is CPICLELLTQPLSLDCGHSFCQACLTANHKTSMPDEGERSCPVCR. At S86 the chain carries Phosphoserine. The B box-type zinc-finger motif lies at 91 to 133; it reads QKVDHCARHGEKLLLFCREDRKVICWLCERSQEHRGHHTFLTE. Residues C96, H99, C118, and H124 each contribute to the Zn(2+) site. Residues 132-241 adopt a coiled-coil conformation; it reads TEEVAQEYQM…LISDLEHRLQ (110 aa). The interval 186 to 199 is required for interaction with GABARAP and for autophagy; sequence FEQLRHILDWVESN. The B30.2/SPRY domain occupies 282 to 494; it reads LKVMLEVLRE…VPMTLCSPSS (213 aa).

Belongs to the TRIM/RBCC family. As to quaternary structure, can form homodimers and homotrimers. In addition to lower-order dimerization, also exhibits a higher-order multimerization and both low- and high-order multimerizations are essential for its restriction activity. Interacts with BTBD1 and BTBD2. Interacts with PSMC4, PSMC5, PSMD7 and HSPA8/HSC70. Interacts (via B30.2/SPRY domain) with HSPA1A/B. Interacts with PSMC2, MAP3K7/TAK1, TAB2 and TAB3. Interacts with SQSTM1. Interacts with TRIM6 and TRIM34. Interacts with ULK1 (phosphorylated form), GABARAP, GABARAPL1, GABARAPL2, MAP1LC3A, MAP1LC3C and BECN1. In terms of processing, degraded in a proteasome-independent fashion in the absence of viral infection but in a proteasome-dependent fashion following exposure to restriction sensitive virus. Post-translationally, autoubiquitinated in a RING finger- and UBE2D2-dependent manner. Monoubiquitinated by TRIM21. Deubiquitinated by Yersinia YopJ. Ubiquitination may not lead to proteasomal degradation.

The protein localises to the cytoplasm. It is found in the nucleus. The catalysed reaction is S-ubiquitinyl-[E2 ubiquitin-conjugating enzyme]-L-cysteine + [acceptor protein]-L-lysine = [E2 ubiquitin-conjugating enzyme]-L-cysteine + N(6)-ubiquitinyl-[acceptor protein]-L-lysine.. It participates in protein modification; protein ubiquitination. Capsid-specific restriction factor that prevents infection from non-host-adapted retroviruses. Blocks viral replication early in the life cycle, after viral entry but before reverse transcription. In addition to acting as a capsid-specific restriction factor, also acts as a pattern recognition receptor that activates innate immune signaling in response to the retroviral capsid lattice. Binding to the viral capsid triggers its E3 ubiquitin ligase activity, and in concert with the heterodimeric ubiquitin conjugating enzyme complex UBE2V1-UBE2N (also known as UBC13-UEV1A complex) generates 'Lys-63'-linked polyubiquitin chains, which in turn are catalysts in the autophosphorylation of the MAP3K7/TAK1 complex (includes TAK1, TAB2, and TAB3). Activation of the MAP3K7/TAK1 complex by autophosphorylation results in the induction and expression of NF-kappa-B and MAPK-responsive inflammatory genes, thereby leading to an innate immune response in the infected cell. Plays a role in regulating autophagy through activation of autophagy regulator BECN1 by causing its dissociation from its inhibitors BCL2 and TAB2. The protein is Tripartite motif-containing protein 5 (TRIM5) of Hoolock hoolock (Western hoolock gibbon).